The sequence spans 1133 residues: DNA repair protein rad8 (1133 aa).

Disordered regions lie at residues 1 to 34 and 392 to 413; these read MKRK…SKPN and PEAR…EEDV. The residue at position 18 (serine 18) is a Phosphoserine. The Helicase ATP-binding domain occupies 516–705; that stretch reads PNSMPYHRGG…YSLIKFMRYE (190 aa). Residue 529-536 coordinates ATP; the sequence is DEMGLGKT. Residues 656-659 carry the DEGH box motif; that stretch reads DEGH. The segment at 877–923 adopts an RING-type zinc-finger fold; the sequence is CPICCNEPIQNPLLLNCKHACCGDCLSEHIQYQKRRNIIPPLCHTCR. A Helicase C-terminal domain is found at 971–1125; the sequence is QLRQLTHSSE…EGKQQVQSIE (155 aa).

It belongs to the SNF2/RAD54 helicase family.

It localises to the cytoplasm. It is found in the nucleus. Probable helicase, member of the UBC2/RAD6 epistasis group. Functions with DNA repair protein rad18 in error-free postreplication DNA repair. Involved in the maintenance of wild-type rates of instability of simple repetitive sequences such as poly(GT) repeats. Plays a role in surviving topoisomerase-mediated DNA damage. The sequence is that of DNA repair protein rad8 from Schizosaccharomyces pombe (strain 972 / ATCC 24843) (Fission yeast).